An 83-amino-acid polypeptide reads, in one-letter code: Sec-independent protein translocase protein TatA (83 aa).

A helical transmembrane segment spans residues Met1–Gly21. Positions Lys44–Ser83 are disordered. Polar residues predominate over residues Gln63–Lys72. Positions Thr73 to Ser83 are enriched in basic and acidic residues.

It belongs to the TatA/E family. As to quaternary structure, the Tat system comprises two distinct complexes: a TatABC complex, containing multiple copies of TatA, TatB and TatC subunits, and a separate TatA complex, containing only TatA subunits. Substrates initially bind to the TatABC complex, which probably triggers association of the separate TatA complex to form the active translocon.

It is found in the cell inner membrane. Its function is as follows. Part of the twin-arginine translocation (Tat) system that transports large folded proteins containing a characteristic twin-arginine motif in their signal peptide across membranes. TatA could form the protein-conducting channel of the Tat system. This chain is Sec-independent protein translocase protein TatA, found in Polaromonas sp. (strain JS666 / ATCC BAA-500).